A 500-amino-acid polypeptide reads, in one-letter code: L-arabinose isomerase (500 aa).

Mn(2+) is bound by residues E306, E333, H350, and H450.

This sequence belongs to the arabinose isomerase family. In terms of assembly, homohexamer. The cofactor is Mn(2+).

It catalyses the reaction beta-L-arabinopyranose = L-ribulose. It functions in the pathway carbohydrate degradation; L-arabinose degradation via L-ribulose; D-xylulose 5-phosphate from L-arabinose (bacterial route): step 1/3. Catalyzes the conversion of L-arabinose to L-ribulose. This chain is L-arabinose isomerase, found in Escherichia coli O7:K1 (strain IAI39 / ExPEC).